The chain runs to 700 residues: DNA ligase 2 (700 aa).

NAD(+)-binding positions include 42–46 (DDAYD) and 89–90 (SL). Catalysis depends on K122, which acts as the N6-AMP-lysine intermediate. NAD(+) contacts are provided by R143, E177, K303, and K327. The Zn(2+) site is built by C421, C424, C437, and C443. The tract at residues 590–621 (MTEPGATPPRPADTDGADGATAEAPGDGGPLA) is disordered. The BRCT domain maps to 615-700 (GDGGPLAGMK…FAVLVAGLLS (86 aa)).

This sequence belongs to the NAD-dependent DNA ligase family. LigA subfamily. Requires Mg(2+) as cofactor. Mn(2+) serves as cofactor.

The catalysed reaction is NAD(+) + (deoxyribonucleotide)n-3'-hydroxyl + 5'-phospho-(deoxyribonucleotide)m = (deoxyribonucleotide)n+m + AMP + beta-nicotinamide D-nucleotide.. Functionally, DNA ligase that catalyzes the formation of phosphodiester linkages between 5'-phosphoryl and 3'-hydroxyl groups in double-stranded DNA using NAD as a coenzyme and as the energy source for the reaction. It is essential for DNA replication and repair of damaged DNA. The chain is DNA ligase 2 from Streptomyces coelicolor (strain ATCC BAA-471 / A3(2) / M145).